We begin with the raw amino-acid sequence, 305 residues long: Probable 4-deoxy-4-formamido-L-arabinose-phosphoundecaprenol deformylase ArnD (305 aa).

Positions 7 to 262 (TKVGLRIDVD…QAKENNIEFV (256 aa)) constitute a NodB homology domain.

This sequence belongs to the polysaccharide deacetylase family. ArnD deformylase subfamily.

The enzyme catalyses 4-deoxy-4-formamido-alpha-L-arabinopyranosyl di-trans,octa-cis-undecaprenyl phosphate + H2O = 4-amino-4-deoxy-alpha-L-arabinopyranosyl di-trans,octa-cis-undecaprenyl phosphate + formate. It participates in glycolipid biosynthesis; 4-amino-4-deoxy-alpha-L-arabinose undecaprenyl phosphate biosynthesis; 4-amino-4-deoxy-alpha-L-arabinose undecaprenyl phosphate from UDP-4-deoxy-4-formamido-beta-L-arabinose and undecaprenyl phosphate: step 2/2. Its pathway is bacterial outer membrane biogenesis; lipopolysaccharide biosynthesis. Functionally, catalyzes the deformylation of 4-deoxy-4-formamido-L-arabinose-phosphoundecaprenol to 4-amino-4-deoxy-L-arabinose-phosphoundecaprenol. The modified arabinose is attached to lipid A and is required for resistance to polymyxin and cationic antimicrobial peptides. In Shewanella sediminis (strain HAW-EB3), this protein is Probable 4-deoxy-4-formamido-L-arabinose-phosphoundecaprenol deformylase ArnD.